A 299-amino-acid chain; its full sequence is 4-sulfomuconolactone hydrolase (299 aa).

The protein belongs to the metallo-dependent hydrolases superfamily. Sulfomuconolactone hydrolase family. In terms of assembly, monomer. Zn(2+) serves as cofactor.

The catalysed reaction is 4-sulfomuconolactone + H2O = maleylacetate + sulfite + 2 H(+). Involved in the degradation of 4-sulfocatechol which is a central intermediate in the degradation of substituted sulfonated benzenes. Catalyzes the hydrolytical desulfonation of 4-sulfomuconolactone to yield maleylacetate. This Rhizobium radiobacter (Agrobacterium tumefaciens) protein is 4-sulfomuconolactone hydrolase.